Here is a 76-residue protein sequence, read N- to C-terminus: cAMP-dependent protein kinase inhibitor alpha (76 aa).

An N-acetylthreonine modification is found at threonine 2. Residues 49–76 are disordered; sequence KTEGEEDAQRNSTEQSGEAQGEAAKSES.

The protein belongs to the PKI family.

Functionally, extremely potent competitive inhibitor of cAMP-dependent protein kinase activity, this protein interacts with the catalytic subunit of the enzyme after the cAMP-induced dissociation of its regulatory chains. This Bos taurus (Bovine) protein is cAMP-dependent protein kinase inhibitor alpha (PKIA).